The following is a 178-amino-acid chain: ATP-dependent protease subunit HslV (178 aa).

Threonine 7 is an active-site residue. The Na(+) site is built by glycine 162, cysteine 165, and threonine 168.

This sequence belongs to the peptidase T1B family. HslV subfamily. As to quaternary structure, a double ring-shaped homohexamer of HslV is capped on each side by a ring-shaped HslU homohexamer. The assembly of the HslU/HslV complex is dependent on binding of ATP.

The protein localises to the cytoplasm. The enzyme catalyses ATP-dependent cleavage of peptide bonds with broad specificity.. With respect to regulation, allosterically activated by HslU binding. Its function is as follows. Protease subunit of a proteasome-like degradation complex believed to be a general protein degrading machinery. In Burkholderia orbicola (strain AU 1054), this protein is ATP-dependent protease subunit HslV.